Here is a 29-residue protein sequence, read N- to C-terminus: U1-pseudomyrmecitoxin-Pt1 subunit SS1 (29 aa).

This sequence belongs to the myrmexin family. Heterodimer composed of subunit SS1 and subunit LS1 (U1-PSDTX-Pt1b), and heterodimer composed of subunit SS1 and LS2 (U1-PSDTX-Pt1a); disulfide-linked. Expressed by the venom gland.

The protein localises to the secreted. Its function is as follows. This heterodimer may have anti-inflammatory properties, since the myrmexin complex (composed of 6 SS-LS heterodimers) inhibits carrageenin-induced edema in a dose-dependent manner (after subcutaneous injection into rats). This chain is U1-pseudomyrmecitoxin-Pt1 subunit SS1, found in Pseudomyrmex triplarinus (Ant).